We begin with the raw amino-acid sequence, 258 residues long: HVA22-like protein j (258 aa).

A disordered region spans residues 153-258; it reads AANQPPTERN…RSNSRTQPAA (106 aa). Polar residues predominate over residues 156 to 169; that stretch reads QPPTERNVNMNAQS. Residues 206–215 are compositionally biased toward pro residues; it reads WPPPTPPPTP.

This sequence belongs to the DP1 family.

In Arabidopsis thaliana (Mouse-ear cress), this protein is HVA22-like protein j (HVA22J).